Consider the following 432-residue polypeptide: Glutamyl-tRNA reductase (432 aa).

Substrate is bound by residues 49 to 52 (TCNR), serine 109, 114 to 116 (EGQ), and glutamine 120. The Nucleophile role is filled by cysteine 50. Position 198 to 203 (198 to 203 (GAGRMS)) interacts with NADP(+).

It belongs to the glutamyl-tRNA reductase family. Homodimer.

It catalyses the reaction (S)-4-amino-5-oxopentanoate + tRNA(Glu) + NADP(+) = L-glutamyl-tRNA(Glu) + NADPH + H(+). It functions in the pathway porphyrin-containing compound metabolism; protoporphyrin-IX biosynthesis; 5-aminolevulinate from L-glutamyl-tRNA(Glu): step 1/2. Its pathway is porphyrin-containing compound metabolism; chlorophyll biosynthesis. In terms of biological role, catalyzes the NADPH-dependent reduction of glutamyl-tRNA(Glu) to glutamate 1-semialdehyde (GSA). This is Glutamyl-tRNA reductase from Synechococcus sp. (strain CC9605).